The sequence spans 436 residues: MMATQTLSIDSYPDGQQMQVVTELKTEQDPNCSEPDVEGVSPPPVGSQTPMDADKQAIYRHPLFPLLALLFEKCEQSTQGSEGTTSASFDVDIENFVRKQEKEGKPFFCEDPETDNLMVKAIQVLRIHLLELEKVNELCKDFCSRYIACLKTKMNSETLLSGEPGSPYSPVQSQQIQSAITGTLSPQGIVVPASALQQGNVTMATVAGGTVYQPVTVVTPQGQVVTQALSPGTIRIQNSQLQLQLNQDLSILHQDDGSSKNKRGVLPKHATNVMRSWLFQHIGHPYPTEDEKKQIAAQTNLTLLQVNNWFINARRRILQPMLDSSCSETPKTKKKTAQNRPVQRFWPDSIASGAAQPAASELTVSEGAVVTITAPVSMNVDSLQSLSSDGATLAVQQVMMAEQSEDDSVDSTGDGGAALAPGHLGGLVLENSDSLQ.

The disordered stretch occupies residues 24-49 (LKTEQDPNCSEPDVEGVSPPPVGSQT). Phosphoserine is present on residues Ser33 and Ser41. An MEIS N-terminal domain is found at 80 to 163 (GSEGTTSASF…MNSETLLSGE (84 aa)). The homeobox; TALE-type DNA-binding region spans 259 to 321 (SKNKRGVLPK…NARRRILQPM (63 aa)). The disordered stretch occupies residues 401–436 (AEQSEDDSVDSTGDGGAALAPGHLGGLVLENSDSLQ).

The protein belongs to the TALE/MEIS homeobox family. In terms of assembly, interacts with MN1.

Its subcellular location is the nucleus. Its function is as follows. Activates transcription in the presence of PBX1A and HOXA1. The polypeptide is Homeobox protein PKNOX1 (Bos taurus (Bovine)).